Consider the following 82-residue polypeptide: Small ribosomal subunit protein bS16 (82 aa).

The protein belongs to the bacterial ribosomal protein bS16 family.

The polypeptide is Small ribosomal subunit protein bS16 (Histophilus somni (strain 2336) (Haemophilus somnus)).